Reading from the N-terminus, the 20-residue chain is Venom peptide Ocy8 (20 aa).

Expressed by the venom gland.

It is found in the secreted. This is Venom peptide Ocy8 from Opisthacanthus cayaporum (South American scorpion).